Consider the following 123-residue polypeptide: Plasminogen (123 aa).

Residues 40–118 (DCYHGNGQSY…RWEFCNLKKC (79 aa)) form the Kringle domain. Cystine bridges form between Cys-41/Cys-118, Cys-62/Cys-101, and Cys-90/Cys-113.

This sequence belongs to the peptidase S1 family. Plasminogen subfamily. In terms of assembly, interacts with CSPG4 and AMOT. Interacts (via the Kringle domains) with HRG; the interaction tethers PLG to the cell surface and enhances its activation. Interacts (via Kringle 4 domain) with ADA; the interaction stimulates PLG activation when in complex with DPP4. Angiostatin: Interacts with ATP5F1A; the interaction inhibits most of the angiogenic effects of angiostatin.

The protein resides in the secreted. It catalyses the reaction Preferential cleavage: Lys-|-Xaa &gt; Arg-|-Xaa, higher selectivity than trypsin. Converts fibrin into soluble products.. Its activity is regulated as follows. Converted into plasmin by plasminogen activators, both plasminogen and its activator being bound to fibrin. Cannot be activated with streptokinase. Functionally, plasmin dissolves the fibrin of blood clots and acts as a proteolytic factor in a variety of other processes including embryonic development, tissue remodeling, tumor invasion, and inflammation. In ovulation, weakens the walls of the Graafian follicle. It activates the urokinase-type plasminogen activator, collagenases and several complement zymogens, such as C1, C4 and C5. Cleavage of fibronectin and laminin leads to cell detachment and apoptosis. Also cleaves fibrin, thrombospondin and von Willebrand factor. Its role in tissue remodeling and tumor invasion may be modulated by CSPG4. Binds to cells. The polypeptide is Plasminogen (PLG) (Capra hircus (Goat)).